Consider the following 264-residue polypeptide: 4-oxalocrotonate decarboxylase (264 aa).

The protein belongs to the hydratase/decarboxylase family.

It carries out the reaction (3E)-2-oxohex-3-enedioate + H(+) = 2-oxopent-4-enoate + CO2. It participates in aromatic compound metabolism; benzoate degradation via hydroxylation. The protein is 4-oxalocrotonate decarboxylase (dmpH) of Pseudomonas sp. (strain CF600).